Reading from the N-terminus, the 124-residue chain is Small ribosomal subunit protein uS13 (124 aa).

The tract at residues 95–124 (GLPVRGQRTRHNARTRKGPRKTVGAKKGKR) is disordered. The span at 101–124 (QRTRHNARTRKGPRKTVGAKKGKR) shows a compositional bias: basic residues.

This sequence belongs to the universal ribosomal protein uS13 family. Part of the 30S ribosomal subunit. Forms a loose heterodimer with protein S19. Forms two bridges to the 50S subunit in the 70S ribosome.

Its function is as follows. Located at the top of the head of the 30S subunit, it contacts several helices of the 16S rRNA. In the 70S ribosome it contacts the 23S rRNA (bridge B1a) and protein L5 of the 50S subunit (bridge B1b), connecting the 2 subunits; these bridges are implicated in subunit movement. Contacts the tRNAs in the A and P-sites. This is Small ribosomal subunit protein uS13 from Coprothermobacter proteolyticus (strain ATCC 35245 / DSM 5265 / OCM 4 / BT).